The chain runs to 279 residues: Pantothenate synthetase (279 aa).

31–38 (MGNLHGGH) lines the ATP pocket. The Proton donor role is filled by H38. A (R)-pantoate-binding site is contributed by Q62. Q62 lines the beta-alanine pocket. An ATP-binding site is contributed by 150 to 153 (GRKD). Q156 is a binding site for (R)-pantoate. Residues V179 and 187–190 (KSSR) contribute to the ATP site.

Belongs to the pantothenate synthetase family. Homodimer.

It localises to the cytoplasm. The enzyme catalyses (R)-pantoate + beta-alanine + ATP = (R)-pantothenate + AMP + diphosphate + H(+). It participates in cofactor biosynthesis; (R)-pantothenate biosynthesis; (R)-pantothenate from (R)-pantoate and beta-alanine: step 1/1. Its function is as follows. Catalyzes the condensation of pantoate with beta-alanine in an ATP-dependent reaction via a pantoyl-adenylate intermediate. The polypeptide is Pantothenate synthetase (Stenotrophomonas maltophilia (strain R551-3)).